The following is a 217-amino-acid chain: Translation initiation factor IF-3 (217 aa).

The segment at 185–217 is disordered; the sequence is YNLPETETTRIREENREKQKEKENTSKEGNKDA. Residues 191-217 are compositionally biased toward basic and acidic residues; the sequence is ETTRIREENREKQKEKENTSKEGNKDA.

It belongs to the IF-3 family. Monomer.

It is found in the cytoplasm. IF-3 binds to the 30S ribosomal subunit and shifts the equilibrium between 70S ribosomes and their 50S and 30S subunits in favor of the free subunits, thus enhancing the availability of 30S subunits on which protein synthesis initiation begins. The polypeptide is Translation initiation factor IF-3 (Methylacidiphilum infernorum (isolate V4) (Methylokorus infernorum (strain V4))).